The following is a 307-amino-acid chain: Ribonuclease Z (307 aa).

Zn(2+) contacts are provided by histidine 63, histidine 65, aspartate 67, histidine 68, histidine 140, aspartate 211, and histidine 269. Catalysis depends on aspartate 67, which acts as the Proton acceptor.

It belongs to the RNase Z family. Homodimer. The cofactor is Zn(2+).

The catalysed reaction is Endonucleolytic cleavage of RNA, removing extra 3' nucleotides from tRNA precursor, generating 3' termini of tRNAs. A 3'-hydroxy group is left at the tRNA terminus and a 5'-phosphoryl group is left at the trailer molecule.. In terms of biological role, zinc phosphodiesterase, which displays some tRNA 3'-processing endonuclease activity. Probably involved in tRNA maturation, by removing a 3'-trailer from precursor tRNA. In Geobacillus kaustophilus (strain HTA426), this protein is Ribonuclease Z.